The following is a 208-amino-acid chain: Uracil phosphoribosyltransferase (208 aa).

5-phospho-alpha-D-ribose 1-diphosphate-binding positions include arginine 78, arginine 103, and 130–138 (DPMLATGGS). Uracil-binding positions include isoleucine 193 and 198-200 (GDA). Aspartate 199 serves as a coordination point for 5-phospho-alpha-D-ribose 1-diphosphate.

Belongs to the UPRTase family. Requires Mg(2+) as cofactor.

The catalysed reaction is UMP + diphosphate = 5-phospho-alpha-D-ribose 1-diphosphate + uracil. Its pathway is pyrimidine metabolism; UMP biosynthesis via salvage pathway; UMP from uracil: step 1/1. With respect to regulation, allosterically activated by GTP. Functionally, catalyzes the conversion of uracil and 5-phospho-alpha-D-ribose 1-diphosphate (PRPP) to UMP and diphosphate. The protein is Uracil phosphoribosyltransferase of Vibrio parahaemolyticus serotype O3:K6 (strain RIMD 2210633).